Consider the following 418-residue polypeptide: Tyrosine--tRNA ligase (418 aa).

Residue Y34 coordinates L-tyrosine. The short motif at 39–48 is the 'HIGH' region element; it reads PTADSLHLGH. Y169 and Q173 together coordinate L-tyrosine. The 'KMSKS' region motif lies at 229–233; that stretch reads KFGKS. K232 is a binding site for ATP. One can recognise an S4 RNA-binding domain in the interval 352-418; that stretch reads LNLVDMLVTA…GKKKYAVLTY (67 aa).

This sequence belongs to the class-I aminoacyl-tRNA synthetase family. TyrS type 1 subfamily. In terms of assembly, homodimer.

The protein resides in the cytoplasm. The catalysed reaction is tRNA(Tyr) + L-tyrosine + ATP = L-tyrosyl-tRNA(Tyr) + AMP + diphosphate + H(+). In terms of biological role, catalyzes the attachment of tyrosine to tRNA(Tyr) in a two-step reaction: tyrosine is first activated by ATP to form Tyr-AMP and then transferred to the acceptor end of tRNA(Tyr). The polypeptide is Tyrosine--tRNA ligase (Streptococcus pyogenes serotype M28 (strain MGAS6180)).